Reading from the N-terminus, the 496-residue chain is Glycerol kinase (496 aa).

Threonine 11 contributes to the ADP binding site. The ATP site is built by threonine 11, threonine 12, and serine 13. Threonine 11 contributes to the sn-glycerol 3-phosphate binding site. Arginine 15 contacts ADP. Positions 81, 82, 133, and 242 each coordinate sn-glycerol 3-phosphate. Residues arginine 81, glutamate 82, tyrosine 133, aspartate 242, and glutamine 243 each coordinate glycerol. ADP contacts are provided by threonine 264 and glycine 307. Residues threonine 264, glycine 307, glutamine 311, and glycine 408 each coordinate ATP. Positions 408 and 412 each coordinate ADP.

Belongs to the FGGY kinase family.

The catalysed reaction is glycerol + ATP = sn-glycerol 3-phosphate + ADP + H(+). The protein operates within polyol metabolism; glycerol degradation via glycerol kinase pathway; sn-glycerol 3-phosphate from glycerol: step 1/1. With respect to regulation, inhibited by fructose 1,6-bisphosphate (FBP). Key enzyme in the regulation of glycerol uptake and metabolism. Catalyzes the phosphorylation of glycerol to yield sn-glycerol 3-phosphate. In Trichlorobacter lovleyi (strain ATCC BAA-1151 / DSM 17278 / SZ) (Geobacter lovleyi), this protein is Glycerol kinase.